Reading from the N-terminus, the 409-residue chain is Peptidase T (409 aa).

His-78 is a Zn(2+) binding site. The active site involves Asp-80. Asp-140 lines the Zn(2+) pocket. The active-site Proton acceptor is Glu-173. Residues Glu-174, Asp-196, and His-379 each contribute to the Zn(2+) site.

It belongs to the peptidase M20B family. It depends on Zn(2+) as a cofactor.

It localises to the cytoplasm. The catalysed reaction is Release of the N-terminal residue from a tripeptide.. Functionally, cleaves the N-terminal amino acid of tripeptides. This is Peptidase T from Salmonella heidelberg (strain SL476).